The following is a 291-amino-acid chain: G1/S-specific cyclin-D2 (291 aa).

Residues 264 to 291 form a disordered region; that stretch reads QQQQSNPSKTIEELDQASTPTDVRDINL. Position 282 is a phosphothreonine (threonine 282).

The protein belongs to the cyclin family. Cyclin D subfamily. In terms of assembly, interacts with the CDK4 and CDK6 protein kinases to form a serine/threonine kinase holoenzyme complex. The cyclin subunit imparts substrate specificity to the complex. Post-translationally, phosphorylation at Thr-282 by MAP kinases is required for ubiquitination and degradation by the DCX(AMBRA1) complex. In terms of processing, ubiquitinated by the DCX(AMBRA1) complex during the transition from G1 to S cell phase, leading to its degradation: ubiquitination is dependent on Thr-282 phosphorylation. The DCX(AMBRA1) complex represents the major regulator of CCND2 stability during the G1/S transition.

The protein resides in the nucleus. The protein localises to the cytoplasm. Its subcellular location is the nucleus membrane. Functionally, regulatory component of the cyclin D2-CDK4 (DC) complex that phosphorylates and inhibits members of the retinoblastoma (RB) protein family including RB1 and regulates the cell-cycle during G(1)/S transition. Phosphorylation of RB1 allows dissociation of the transcription factor E2F from the RB/E2F complex and the subsequent transcription of E2F target genes which are responsible for the progression through the G(1) phase. Hypophosphorylates RB1 in early G(1) phase. Cyclin D-CDK4 complexes are major integrators of various mitogenenic and antimitogenic signals. The polypeptide is G1/S-specific cyclin-D2 (CCND2) (Gallus gallus (Chicken)).